An 881-amino-acid chain; its full sequence is DNA replication helicase (881 aa).

Residue 90 to 97 (GNAGSGKS) coordinates ATP.

This sequence belongs to the herpesviridae helicase family. As to quaternary structure, associates with the primase and the primase-associated factor to form the helicase-primase complex.

The protein resides in the host nucleus. Its function is as follows. Component of the helicase/primase complex. Unwinds the DNA at the replication forks and generates single-stranded DNA for both leading and lagging strand synthesis. The primase synthesizes short RNA primers on the lagging strand that the polymerase elongates using dNTPs. Possesses helicase-like motifs and therefore may act as the helicase subunit of the complex. The polypeptide is DNA replication helicase (Homo sapiens (Human)).